Consider the following 421-residue polypeptide: Hydrolyase poxO (421 aa).

Ser-239 (nucleophile) is an active-site residue.

The protein belongs to the AB hydrolase superfamily. FUS2 hydrolase family. As to quaternary structure, homodimer.

The protein operates within secondary metabolite biosynthesis. Hydrolyase; part of the gene cluster that mediates the biosynthesis of oxaleimides, cytotoxic compounds containing an unusual disubstituted succinimide moiety. The first step of the pathway is provided by the HR-PKS poxF that serves in a new mode of collaborative biosynthesis with the PKS-NRPS poxE, by providing the olefin containing amino acid substrate via the synthesis of an ACP-bound dec-4-enoate. The cytochrome P450 monooxygenase poxM-catalyzed oxidation at the alpha-position creates the enzyme-bound 2-hydroxydec-4-enoyl-ACP thioester, which may be prone to spontaneous hydrolysis to yield 2-hydroxydec-4-enoic acid due to increased electrophilicity of the carbonyl. 2-hydroxydec-4-enoic acid can then be further oxidized by poxM to yield the alpha-ketoacid 2-oxodec-4-enoicacid, which is reductively aminated by the aminotransferase poxL to yield (S,E)-2-aminodec-4-enoic acid. The Hybrid PKS-NRPS synthetase poxE then performs condensation between the octaketide product of its PKS modules and the amino group of (S,E)-2-aminodec-4-enoic acid which is activated and incorporated by the adenylation domain. The resulting aminoacyl product can be cyclized by the Diels-Alderase PoxQ and reductively released by the reductive (R) domain of poxE to yield an aldehyde intermediate. The released aldehyde is then substrate for a Knoevenagel condensation by the hydrolyase poxO followed by an oxidation at the 5-position of the pyrrolidone ring. The presence of the olefin from the amino acid building block allows for migration of the substituted allyl group to occur. This allylic transposition reaction takes place in a conjugate addition, semipinacol-like fashion to yield a succinimide intermediate. Iterative two-electron oxidations of the C7 methyl of the succinimide intermediate to the carboxylic acid can be catalyzed by one of two remaining cytochrome P450 monooxygenasess poxC or poxD to yield oxaleimide A. Subsequent oxidation yields the maleimide scaffold oxaleimide I. Both oxaleimide A and oxaleimide I can undergo oxidative modifications in the decalin ring to yield the series of products oxaleimides B to H. The protein is Hydrolyase poxO of Penicillium oxalicum.